Consider the following 333-residue polypeptide: Protein-methionine-sulfoxide reductase catalytic subunit MsrP (333 aa).

The segment at residues 1 to 43 (MSKQRKLTEADVTPESVFYQRRKVLQALGITAASLALPHNAQA) is a signal peptide (tat-type signal). Mo-molybdopterin contacts are provided by residues asparagine 87, 90 to 91 (YE), cysteine 145, threonine 180, asparagine 232, arginine 237, and 248 to 250 (GIK).

This sequence belongs to the MsrP family. Heterodimer of a catalytic subunit (MsrP) and a heme-binding subunit (MsrQ). It depends on Mo-molybdopterin as a cofactor. Predicted to be exported by the Tat system. The position of the signal peptide cleavage has not been experimentally proven.

It localises to the periplasm. The catalysed reaction is L-methionyl-[protein] + a quinone + H2O = L-methionyl-(S)-S-oxide-[protein] + a quinol. It carries out the reaction L-methionyl-[protein] + a quinone + H2O = L-methionyl-(R)-S-oxide-[protein] + a quinol. Functionally, part of the MsrPQ system that repairs oxidized periplasmic proteins containing methionine sulfoxide residues (Met-O), using respiratory chain electrons. Thus protects these proteins from oxidative-stress damage caused by reactive species of oxygen and chlorine generated by the host defense mechanisms. MsrPQ is essential for the maintenance of envelope integrity under bleach stress, rescuing a wide series of structurally unrelated periplasmic proteins from methionine oxidation. The catalytic subunit MsrP is non-stereospecific, being able to reduce both (R-) and (S-) diastereoisomers of methionine sulfoxide. The chain is Protein-methionine-sulfoxide reductase catalytic subunit MsrP from Serratia proteamaculans (strain 568).